Here is a 293-residue protein sequence, read N- to C-terminus: Probable xyloglucan endotransglucosylase/hydrolase protein B (293 aa).

The signal sequence occupies residues 1 to 21; the sequence is MASSLLILCLVLVSLASSALC. The region spanning 23-220 is the GH16 domain; sequence APRRPVDVPF…WSKAPFVAEY (198 aa). The active-site Nucleophile is glutamate 106. Glutamate 110 acts as the Proton donor in catalysis. Glutamate 110 is a binding site for xyloglucan. An N-linked (GlcNAc...) asparagine glycan is attached at asparagine 114. Residues 123-125, 133-135, 199-200, and glycine 204 contribute to the xyloglucan site; these read QTN, DRE, and DW. 2 cysteine pairs are disulfide-bonded: cysteine 228–cysteine 237 and cysteine 274–cysteine 287. A xyloglucan-binding site is contributed by arginine 279.

This sequence belongs to the glycosyl hydrolase 16 family. XTH group 1 subfamily. Post-translationally, contains at least one intrachain disulfide bond essential for its enzymatic activity. In terms of tissue distribution, predominantly expressed in the phloem fibers of growing internodes. Weakly or not expressed in the xylem. In the internode, it is expressed closer to the bottom of the internode compared to XTHA.

It is found in the secreted. It localises to the cell wall. Its subcellular location is the extracellular space. The protein localises to the apoplast. It carries out the reaction breaks a beta-(1-&gt;4) bond in the backbone of a xyloglucan and transfers the xyloglucanyl segment on to O-4 of the non-reducing terminal glucose residue of an acceptor, which can be a xyloglucan or an oligosaccharide of xyloglucan.. Catalyzes xyloglucan endohydrolysis (XEH) and/or endotransglycosylation (XET). Cleaves and religates xyloglucan polymers, an essential constituent of the primary cell wall, and thereby participates in cell wall construction of growing tissues. The sequence is that of Probable xyloglucan endotransglucosylase/hydrolase protein B (XTHB) from Phaseolus angularis (Azuki bean).